Consider the following 595-residue polypeptide: 2-succinyl-5-enolpyruvyl-6-hydroxy-3-cyclohexene-1-carboxylate synthase (595 aa).

Belongs to the TPP enzyme family. MenD subfamily. In terms of assembly, homodimer. The cofactor is Mg(2+). Requires Mn(2+) as cofactor. Thiamine diphosphate serves as cofactor.

It catalyses the reaction isochorismate + 2-oxoglutarate + H(+) = 5-enolpyruvoyl-6-hydroxy-2-succinyl-cyclohex-3-ene-1-carboxylate + CO2. It functions in the pathway quinol/quinone metabolism; 1,4-dihydroxy-2-naphthoate biosynthesis; 1,4-dihydroxy-2-naphthoate from chorismate: step 2/7. The protein operates within cofactor biosynthesis; phylloquinone biosynthesis. Catalyzes the thiamine diphosphate-dependent decarboxylation of 2-oxoglutarate and the subsequent addition of the resulting succinic semialdehyde-thiamine pyrophosphate anion to isochorismate to yield 2-succinyl-5-enolpyruvyl-6-hydroxy-3-cyclohexene-1-carboxylate (SEPHCHC). This chain is 2-succinyl-5-enolpyruvyl-6-hydroxy-3-cyclohexene-1-carboxylate synthase, found in Synechocystis sp. (strain ATCC 27184 / PCC 6803 / Kazusa).